A 1407-amino-acid chain; its full sequence is MKDLLKFLKSQTKNEDFDAIKISLASPDMIRSWSFGEVKKPETINYRTFKPERDGLFCARIFGPVKDYECLCGKYKRLKHRGVICEKCGVEVTQSKVRRERMGHIELSSPTAHIWFLKSLPSRIGLLLDMPLRDIERVLYFESYVVIETGMTNLEKRQILTEEQYLDSLEEFGDEFHATMGAEAIQFLLKDINLVQECNVLRIELNETNSETKRKKLTKRIKLLESFIQSHNKPEWMILNVLPVLPPDLRPLVPLDGGRFATSDLNDLYRRVINRNNRLKRLLDLAAPDIIVRNEKRMLQEAVDALLDNGRRGRAITGSNKRPLKSLADMIKGKQGRFRQNLLGKRVDYSGRSVITVGPYLHLHQCGLPKKMALELFKPFIYGKLEVRGLATTIKAAKKMVEREEAIVWDILDEVIREHPVLLNRAPTLHRLGIQAFEPVLIEGKAIQLHPLVCAAYNADFDGDQMAVHVPLTLESQLEARALMMSTNNILSPANGEPIIVPSQDVVLGLYYMTREKINGKGEGMLLNGSNEAEKVYRLGIAELHSLVKVRIIEYKKNEDKSFTAIKKIIPTTIGRAILWMIIPKGLPFSIVNQTLGKKDISKMLNTCYRILGLKSTVFFADQIMYTGFAYAARSGASVGIDDMVIPEKKANIINEAEIEVAEIQEQFQSGLVTAGERYNKVIDIWAAANERVAKAMMQNLSTESVINKKGYKQKQISFNSIFMMADSGARGSAAQIRQLAGMRGLMAKPDGSIIETPITANFREGLNVLQYFISTHGARKGLADTALKTANSGYLTRRLVDVAQDLVVTQDDCRTHEGILMTPLIEGGDVKEPLRERVLGRVTAENIIIPNTKNILIKRNTLLNEKWCDLLEHNSIDNVKVRSVVNCDTDFGVCAYCYGRDLARGNLVNKGEAIGVIAAQSIGEPGTQLTMRTFHIGGAASRAAAESSIQVKNQGIINLNNAKFVINSAGKTVITSRNVELNIIDNFGRTKESYKVPYGAIMAKGDGEKVHSGETVAKWDPHTMPVITEVNGLVRFVDMIDGQSITRQADELTGLSSIVILDTAERMSSGKDLRPALKIIDCNGNDVLISGTDMPAQYFLPGKAIVQLDDGVQISSGDTLARVPQESGGTKDITGGLPRVADLFEARRPKELAILAEISGIISFGKETKGKRRLVITPVDGSDSYEEMIPKWRQLNVFEGERVDRGDVISDGPESPHDILRLRGVQAVTRYIVNEVQEVYRLQGVKINDKHIEVIIRQMLRKATVVKSRDSDFLEGEQVEFSHIKISNRMLDKKKKMPATFSRDLLGITKASLATESFISAASFQETTRVLTESAVAGKRDELRGLKENVIVGRLIPAGTGYAYHKERLNRRQKKHNNPTVSSSQISAEEASASLSELLNSALIEK.

Residues Cys70, Cys72, Cys85, and Cys88 each contribute to the Zn(2+) site. Asp460, Asp462, and Asp464 together coordinate Mg(2+). Residues Cys814, Cys888, Cys895, and Cys898 each coordinate Zn(2+).

The protein belongs to the RNA polymerase beta' chain family. As to quaternary structure, the RNAP catalytic core consists of 2 alpha, 1 beta, 1 beta' and 1 omega subunit. When a sigma factor is associated with the core the holoenzyme is formed, which can initiate transcription. Mg(2+) serves as cofactor. The cofactor is Zn(2+).

The enzyme catalyses RNA(n) + a ribonucleoside 5'-triphosphate = RNA(n+1) + diphosphate. DNA-dependent RNA polymerase catalyzes the transcription of DNA into RNA using the four ribonucleoside triphosphates as substrates. The chain is DNA-directed RNA polymerase subunit beta' from Buchnera aphidicola subsp. Acyrthosiphon pisum (strain APS) (Acyrthosiphon pisum symbiotic bacterium).